A 759-amino-acid polypeptide reads, in one-letter code: Secretin XpsD (759 aa).

An N-terminal signal peptide occupies residues 1–21 (MSERMTPRLFPVSLLIGLLAG). Cys-22 carries N-palmitoyl cysteine lipidation. Cys-22 is lipidated: S-diacylglycerol cysteine. Residues 40 to 51 (VGAAGATQTTAE) are compositionally biased toward low complexity. The segment at 40–69 (VGAAGATQTTAEQRADGNASAKPTPVIRRG) is disordered. Residues 92–187 (GSATFNFEGE…APSTASPSAA (96 aa)) are N0. Residues 189-253 (GFEVRVVPLK…VQIFDVDWLS (65 aa)) form an N1 region. The N2 stretch occupies residues 254-323 (GMSVGVFPIQ…IQQWLDRIDS (70 aa)). The interval 326–474 (GGVRLFSYEL…SIRDVIEKLD (149 aa)) is N3. The tract at residues 352–434 (GGRGNGGNSG…PPSTNQNGSV (83 aa)) is disordered. Gly residues predominate over residues 392 to 401 (ATGGDIGGTS). Residues 425-434 (PPSTNQNGSV) show a composition bias toward polar residues. The interval 479–734 (QVHIEAQIAE…VLITPSIVRN (256 aa)) is secretin. The segment at 736–759 (QDARDLTDEYGSKFKSMRPMDVHK) is s domain.

It belongs to the bacterial secretin family. GSP D subfamily. As to quaternary structure, forms a cylindrical channel with 15 subunits. Binds to XpsN.

It is found in the cell outer membrane. Involved in a type II secretion system (T2SS, formerly general secretion pathway, GSP) for the export of proteins. This subunit forms the outer membrane channel. In Xanthomonas campestris pv. campestris (strain ATCC 33913 / DSM 3586 / NCPPB 528 / LMG 568 / P 25), this protein is Secretin XpsD (xpsD).